Here is a 427-residue protein sequence, read N- to C-terminus: Polyprenol-phosphate-mannose-dependent alpha-(1-2)-phosphatidylinositol mannoside mannosyltransferase (427 aa).

The next 10 helical transmembrane spans lie at 18–38, 101–121, 143–163, 191–211, 218–238, 279–299, 308–328, 331–346, 351–371, and 386–406; these read LWCLLWLLAGVALGYVAWRLF, ASVAITVLTLVLLIASTAIVL, WLAVLIVAPATIWLEPISSNF, LMLGLGIALKLTPAVFLLYFL, AALTALASFAVATLLGFVLAW, ERFALWVAGSLLVLAATIWAM, PTLAVICVALFGLVVSPVSWS, WVWMLPAVLVIGLLGW, VALAMLSLAGVVLMRWTPIDL, and LAGMSYVWWALAVIVVAGLTV.

Belongs to the glycosyltransferase 87 family.

It is found in the cell membrane. The protein operates within phospholipid metabolism; phosphatidylinositol metabolism. Functionally, responsible for the addition of alpha-(1-2) mannose branches to the linear mannan core on the biosynthetic pathway to mature lipoarabinomannan (LAM). The protein is Polyprenol-phosphate-mannose-dependent alpha-(1-2)-phosphatidylinositol mannoside mannosyltransferase of Mycobacterium tuberculosis (strain ATCC 25618 / H37Rv).